Consider the following 151-residue polypeptide: Ribonuclease H (151 aa).

One can recognise an RNase H type-1 domain in the interval 1–141; it reads MKNVIIYTDG…ADALANRGID (141 aa). 4 residues coordinate Mg(2+): Asp-9, Glu-47, Asp-69, and Asp-133.

It belongs to the RNase H family. In terms of assembly, monomer. The cofactor is Mg(2+).

The protein resides in the cytoplasm. The enzyme catalyses Endonucleolytic cleavage to 5'-phosphomonoester.. In terms of biological role, endonuclease that specifically degrades the RNA of RNA-DNA hybrids. This is Ribonuclease H from Alcanivorax borkumensis (strain ATCC 700651 / DSM 11573 / NCIMB 13689 / SK2).